A 343-amino-acid chain; its full sequence is Heat-inducible transcription repressor HrcA (343 aa).

It belongs to the HrcA family.

Its function is as follows. Negative regulator of class I heat shock genes (grpE-dnaK-dnaJ and groELS operons). Prevents heat-shock induction of these operons. This Mycoplasma genitalium (strain ATCC 33530 / DSM 19775 / NCTC 10195 / G37) (Mycoplasmoides genitalium) protein is Heat-inducible transcription repressor HrcA.